A 314-amino-acid polypeptide reads, in one-letter code: 4-diphosphocytidyl-2-C-methyl-D-erythritol kinase (314 aa).

Lysine 11 is an active-site residue. ATP is bound at residue 99–109 (PMAAGLAGGST). Aspartate 141 is a catalytic residue.

Belongs to the GHMP kinase family. IspE subfamily.

The enzyme catalyses 4-CDP-2-C-methyl-D-erythritol + ATP = 4-CDP-2-C-methyl-D-erythritol 2-phosphate + ADP + H(+). Its pathway is isoprenoid biosynthesis; isopentenyl diphosphate biosynthesis via DXP pathway; isopentenyl diphosphate from 1-deoxy-D-xylulose 5-phosphate: step 3/6. Functionally, catalyzes the phosphorylation of the position 2 hydroxy group of 4-diphosphocytidyl-2C-methyl-D-erythritol. The chain is 4-diphosphocytidyl-2-C-methyl-D-erythritol kinase from Trichodesmium erythraeum (strain IMS101).